The sequence spans 253 residues: Zinc import ATP-binding protein ZnuC (253 aa).

An ABC transporter domain is found at V6 to A227. Position 38-45 (G38–S45) interacts with ATP.

The protein belongs to the ABC transporter superfamily. Zinc importer (TC 3.A.1.15.5) family. The complex is composed of two ATP-binding proteins (ZnuC), two transmembrane proteins (ZnuB) and a solute-binding protein (ZnuA).

The protein resides in the cell inner membrane. It carries out the reaction Zn(2+)(out) + ATP(in) + H2O(in) = Zn(2+)(in) + ADP(in) + phosphate(in) + H(+)(in). In terms of biological role, part of the ABC transporter complex ZnuABC involved in zinc import. Responsible for energy coupling to the transport system. The polypeptide is Zinc import ATP-binding protein ZnuC (Yersinia pestis bv. Antiqua (strain Antiqua)).